Here is a 129-residue protein sequence, read N- to C-terminus: UPF0102 protein CT2262 (129 aa).

This sequence belongs to the UPF0102 family.

This is UPF0102 protein CT2262 from Chlorobaculum tepidum (strain ATCC 49652 / DSM 12025 / NBRC 103806 / TLS) (Chlorobium tepidum).